A 152-amino-acid chain; its full sequence is Ribosome maturation factor RimP (152 aa).

It belongs to the RimP family.

The protein localises to the cytoplasm. Its function is as follows. Required for maturation of 30S ribosomal subunits. The polypeptide is Ribosome maturation factor RimP (Citrobacter koseri (strain ATCC BAA-895 / CDC 4225-83 / SGSC4696)).